Reading from the N-terminus, the 488-residue chain is MGKFLATLILFFQFCPLILGDYSPSCCTLTIGVSSYHSKPCNPAQPVCSWTLDLLALSADQALQPPCPNLVSYSSYHATYSLYLFPHWIKKPNRNGGGYYSASYSDPCSLKCPYLGCQSWTCPYTGAVSSPYWKFQQDVNFTQEVSRLNINLHFSKCGFPFSLLVDAPGYDPIWFLNTEPSQLPPTAPPLLPHSNLDHILEPSIPWKSKLLTLVQLTLQSTNYTCIVCIDRASLSTWHVLYSPNVSVPSSSSTPLLYPSLALPAPHLTLPFNWTHCFDPQIQAIVSSPCHNSLILPPFSLSPVPTLGSRSRRAVPVAVWLVSALAMGAGVAGGITGSMSLASGKSLLHEVDKDISQLTQAIVKNHKNLLKIAQYAAQNRRGLDLLFWEQGGLCKALQEQCCFLNITNSHVSILQERPPLENRVLTGWGLNWDLGLSQWAREALQTGITLVALLLLVILAGPCILRQLRHLPSRVRYPHYSLINPESSL.

A signal peptide spans 1–20 (MGKFLATLILFFQFCPLILG). Over 21–442 (DYSPSCCTLT…LGLSQWAREA (422 aa)) the chain is Extracellular. Residues Asn140 and Asn222 are each glycosylated (N-linked (GlcNAc...) asparagine; by host). The CXXC signature appears at 225–228 (CIVC). 3 disulfide bridges follow: Cys225-Cys228, Cys225-Cys401, and Cys393-Cys400. Residues Asn244 and Asn272 are each glycosylated (N-linked (GlcNAc...) asparagine; by host). The fusion peptide stretch occupies residues 313 to 333 (AVPVAVWLVSALAMGAGVAGG). Positions 327–339 (GAGVAGGITGSMS) are gly-rich. 2 coiled-coil regions span residues 340-385 (LASG…LDLL) and 397-429 (QEQC…GWGL). Residues 376 to 392 (AQNRRGLDLLFWEQGGL) are immunosuppression. Positions 393-401 (CKALQEQCC) match the CX6CC motif. Residue Asn404 is glycosylated (N-linked (GlcNAc...) asparagine; by host). A helical membrane pass occupies residues 443-463 (LQTGITLVALLLLVILAGPCI). A lipid anchor (S-palmitoyl cysteine; by host) is attached at Cys462. Topologically, residues 464–488 (LRQLRHLPSRVRYPHYSLINPESSL) are cytoplasmic.

As to quaternary structure, the mature envelope protein (Env) consists of a trimer of SU-TM heterodimers attached by a labile interchain disulfide bond. In terms of processing, specific enzymatic cleavages in vivo yield mature proteins. Envelope glycoproteins are synthesized as an inactive precursor that is N-glycosylated and processed likely by host cell furin or by a furin-like protease in the Golgi to yield the mature SU and TM proteins. The cleavage site between SU and TM requires the minimal sequence [KR]-X-[KR]-R. Post-translationally, the CXXC motif is highly conserved across a broad range of retroviral envelope proteins. It is thought to participate in the formation of a labile disulfide bond possibly with the CX6CC motif present in the transmembrane protein. Isomerization of the intersubunit disulfide bond to an SU intrachain disulfide bond is thought to occur upon receptor recognition in order to allow membrane fusion. The transmembrane protein is palmitoylated.

Its subcellular location is the virion membrane. It is found in the host cell membrane. Its function is as follows. The surface protein (SU) attaches the virus to the host cell by binding to its receptor. This interaction triggers the refolding of the transmembrane protein (TM) and is thought to activate its fusogenic potential by unmasking its fusion peptide. Fusion occurs at the host cell plasma membrane. In terms of biological role, the transmembrane protein (TM) acts as a class I viral fusion protein. Under the current model, the protein has at least 3 conformational states: pre-fusion native state, pre-hairpin intermediate state, and post-fusion hairpin state. During viral and target cell membrane fusion, the coiled coil regions (heptad repeats) assume a trimer-of-hairpins structure, positioning the fusion peptide in close proximity to the C-terminal region of the ectodomain. The formation of this structure appears to drive apposition and subsequent fusion of viral and target cell membranes. Membranes fusion leads to delivery of the nucleocapsid into the cytoplasm. This is Envelope glycoprotein gp62 (env) from Human T-cell leukemia virus 1 (strain Japan MT-2 subtype A) (HTLV-1).